The primary structure comprises 239 residues: MQRGALSPVLMLSAAPEPPPRPPPALSPPGPGSAPRHGSARSGPAPEPSGGLAAALDSSLRAAVAFKAEGQRCYREKKFREAIGKYHRALLQLKAAQGARPGGLPTPSPGPTTSPGPARLSEEQRRLVENTEVECYDSLTACLLQSELVNYERVREYCLKVLEKQQGNFKATYRAGIAFYHLGDYARALRYLQEARSREPTDTNVLRYIQLTQLKMNRCSLQREDSDGGTGGPARNVVG.

A disordered region spans residues Met1–Ala54. Phosphoserine is present on residues Ser7 and Ser27. Positions Pro16–Gly32 are enriched in pro residues. Residues Ala63 to Gln97 form a TPR 1 repeat. The disordered stretch occupies residues Gly98–Ser121. Positions Leu104–Ser114 are enriched in pro residues. One copy of the TPR 2 repeat lies at Phe169–Asp202.

The protein belongs to the TTC9 family.

The chain is Tetratricopeptide repeat protein 9B (Ttc9b) from Mus musculus (Mouse).